The primary structure comprises 445 residues: Ribosomal protein uS12 methylthiotransferase RimO (445 aa).

The 116-residue stretch at Lys-6–Lys-121 folds into the MTTase N-terminal domain. Positions 15, 50, 84, 159, 163, and 166 each coordinate [4Fe-4S] cluster. In terms of domain architecture, Radical SAM core spans Leu-145–Glu-375. The TRAM domain maps to Gln-378–Gln-445.

It belongs to the methylthiotransferase family. RimO subfamily. [4Fe-4S] cluster serves as cofactor.

It localises to the cytoplasm. The enzyme catalyses L-aspartate(89)-[ribosomal protein uS12]-hydrogen + (sulfur carrier)-SH + AH2 + 2 S-adenosyl-L-methionine = 3-methylsulfanyl-L-aspartate(89)-[ribosomal protein uS12]-hydrogen + (sulfur carrier)-H + 5'-deoxyadenosine + L-methionine + A + S-adenosyl-L-homocysteine + 2 H(+). Its function is as follows. Catalyzes the methylthiolation of an aspartic acid residue of ribosomal protein uS12. The polypeptide is Ribosomal protein uS12 methylthiotransferase RimO (Desulfitobacterium hafniense (strain Y51)).